The chain runs to 351 residues: DNA polymerase IV (351 aa).

In terms of domain architecture, UmuC spans 4-185 (IIHVDMDCFF…LPLEKIPGVG (182 aa)). Aspartate 8 and aspartate 103 together coordinate Mg(2+). Glutamate 104 is a catalytic residue.

The protein belongs to the DNA polymerase type-Y family. As to quaternary structure, monomer. Requires Mg(2+) as cofactor.

It is found in the cytoplasm. The enzyme catalyses DNA(n) + a 2'-deoxyribonucleoside 5'-triphosphate = DNA(n+1) + diphosphate. Poorly processive, error-prone DNA polymerase involved in untargeted mutagenesis. Copies undamaged DNA at stalled replication forks, which arise in vivo from mismatched or misaligned primer ends. These misaligned primers can be extended by PolIV. Exhibits no 3'-5' exonuclease (proofreading) activity. May be involved in translesional synthesis, in conjunction with the beta clamp from PolIII. The protein is DNA polymerase IV of Shigella flexneri.